The chain runs to 505 residues: MLFLNAKFIDLDLGENAVIVNDEDLKGTSYYPQDRVLIESHAGAVIGNIYSTKTMVKKGEVGMLVKELKEVSISEGEEVKLRHAEKPESIPFIKKKMDGQVLNPHEIRTIIDEIVSKKLSNIELSAFVSSTYINGMNMDEISEMTKRIAETGDMISWEKSLVVDIHSIGGVPGNKYALLSIPILAAAGITIPKTSSRAITSPAGTADVMEVLTNVELKEEEIKRIVKTTNGCLAWGGGVNLAPADDIIINVERPVSIDPQPQLLASVMAKKIATGIKYTVIDIPVGKGVKIKNEAEGAKLARKFIELGELLNIKVECVLTYGGQPLGRAIGPALEAREAIEALQDPKNAPKSLIEKALSLAGILLELGGAAQIGEGQKLAWEILESGRALEKFNQIITEQGGTPKKPEEIELGEYVEEIIAPIDGYITDISNTAITNVVKEAGAPRDKKAGILLNSKIGNQVKQGDILYTIYSGSEERLVSAVNLARRVYPVKVEGMLIERISKF.

Residues G170, 196-201 (SRAITS), and T205 each bind AMP. D258 acts as the Proton donor in catalysis. AMP-binding residues include S266 and K290.

It belongs to the thymidine/pyrimidine-nucleoside phosphorylase family. Type 2 subfamily.

It catalyses the reaction AMP + phosphate = alpha-D-ribose 1,5-bisphosphate + adenine. The enzyme catalyses CMP + phosphate = cytosine + alpha-D-ribose 1,5-bisphosphate. It carries out the reaction UMP + phosphate = alpha-D-ribose 1,5-bisphosphate + uracil. In terms of biological role, catalyzes the conversion of AMP and phosphate to adenine and ribose 1,5-bisphosphate (R15P). Exhibits phosphorylase activity toward CMP and UMP in addition to AMP. Functions in an archaeal AMP degradation pathway, together with R15P isomerase and RubisCO. This chain is AMP phosphorylase, found in Methanococcus maripaludis (strain C6 / ATCC BAA-1332).